A 262-amino-acid polypeptide reads, in one-letter code: tRNA pseudouridine synthase B (262 aa).

Aspartate 77 acts as the Nucleophile in catalysis.

Belongs to the pseudouridine synthase TruB family. Type 1 subfamily.

The catalysed reaction is uridine(55) in tRNA = pseudouridine(55) in tRNA. In terms of biological role, responsible for synthesis of pseudouridine from uracil-55 in the psi GC loop of transfer RNAs. The protein is tRNA pseudouridine synthase B of Protochlamydia amoebophila (strain UWE25).